Consider the following 436-residue polypeptide: Protein arginine methyltransferase NDUFAF7, mitochondrial (436 aa).

The N-terminal 41 residues, 1 to 41, are a transit peptide targeting the mitochondrion; that stretch reads MNALVRRCVARAGLPCIWRGKCYSSGNEPAESNQVTPMLRH. Residues 411 to 436 are disordered; the sequence is GSQERNACQSKTPSSSVAGFDELVWQ. Positions 413–427 are enriched in polar residues; it reads QERNACQSKTPSSSV.

The protein belongs to the NDUFAF7 family. As to quaternary structure, interacts with NDUFS2.

It is found in the mitochondrion. The catalysed reaction is L-arginyl-[protein] + 2 S-adenosyl-L-methionine = N(omega),N(omega)'-dimethyl-L-arginyl-[protein] + 2 S-adenosyl-L-homocysteine + 2 H(+). Arginine methyltransferase involved in the assembly or stability of mitochondrial NADH:ubiquinone oxidoreductase complex (complex I). Acts by mediating symmetric dimethylation of 'Arg-118' of NDUFS2 after it assembles into the complex I, stabilizing the early intermediate complex. The polypeptide is Protein arginine methyltransferase NDUFAF7, mitochondrial (Mus musculus (Mouse)).